Reading from the N-terminus, the 234-residue chain is UPF0173 metal-dependent hydrolase RHECIAT_CH0001941 (234 aa).

The protein belongs to the UPF0173 family.

This is UPF0173 metal-dependent hydrolase RHECIAT_CH0001941 from Rhizobium etli (strain CIAT 652).